A 423-amino-acid polypeptide reads, in one-letter code: Isovaleryl-CoA dehydrogenase, mitochondrial (423 aa).

A mitochondrion-targeting transit peptide spans 1-29 (MATATRLLGWRVASWRMRPPPAGFVSQRA). N6-acetyllysine; alternate is present on residues lysine 55, lysine 64, and lysine 75. N6-succinyllysine; alternate is present on residues lysine 55, lysine 64, and lysine 75. FAD-binding positions include 162-171 (LAMSEPNAGS) and 195-197 (WIT). Serine 171 provides a ligand contact to substrate. Residue 219-220 (SR) participates in substrate binding. Lysine 238 is subject to N6-acetyllysine. Lysine 259 bears the N6-acetyllysine; alternate mark. An N6-succinyllysine; alternate modification is found at lysine 259. Residues tyrosine 274 and 281–284 (DLER) contribute to the substrate site. Residue glutamate 283 is the Proton acceptor of the active site. FAD is bound at residue arginine 309. Lysine 315 bears the N6-succinyllysine mark. FAD-binding positions include glutamine 320 and 377–381 (QCFGG). Substrate is bound at residue 404–405 (AG). FAD is bound at residue 406-408 (TSE).

Belongs to the acyl-CoA dehydrogenase family. In terms of assembly, homotetramer. FAD is required as a cofactor.

Its subcellular location is the mitochondrion matrix. It catalyses the reaction 3-methylbutanoyl-CoA + oxidized [electron-transfer flavoprotein] + H(+) = 3-methylbut-2-enoyl-CoA + reduced [electron-transfer flavoprotein]. It carries out the reaction pentanoyl-CoA + oxidized [electron-transfer flavoprotein] + H(+) = (2E)-pentenoyl-CoA + reduced [electron-transfer flavoprotein]. The catalysed reaction is hexanoyl-CoA + oxidized [electron-transfer flavoprotein] + H(+) = (2E)-hexenoyl-CoA + reduced [electron-transfer flavoprotein]. The enzyme catalyses butanoyl-CoA + oxidized [electron-transfer flavoprotein] + H(+) = (2E)-butenoyl-CoA + reduced [electron-transfer flavoprotein]. It functions in the pathway amino-acid degradation; L-leucine degradation; (S)-3-hydroxy-3-methylglutaryl-CoA from 3-isovaleryl-CoA: step 1/3. Catalyzes the conversion of isovaleryl-CoA/3-methylbutanoyl-CoA to 3-methylbut-2-enoyl-CoA as an intermediate step in the leucine (Leu) catabolic pathway. To a lesser extent, is also able to catalyze the oxidation of other saturated short-chain acyl-CoA thioesters as pentanoyl-CoA, hexenoyl-CoA and butenoyl-CoA. The polypeptide is Isovaleryl-CoA dehydrogenase, mitochondrial (IVD) (Pongo abelii (Sumatran orangutan)).